The sequence spans 469 residues: 3-isopropylmalate dehydratase large subunit (469 aa).

Residues C350, C410, and C413 each contribute to the [4Fe-4S] cluster site.

It belongs to the aconitase/IPM isomerase family. LeuC type 1 subfamily. In terms of assembly, heterodimer of LeuC and LeuD. The cofactor is [4Fe-4S] cluster.

The enzyme catalyses (2R,3S)-3-isopropylmalate = (2S)-2-isopropylmalate. The protein operates within amino-acid biosynthesis; L-leucine biosynthesis; L-leucine from 3-methyl-2-oxobutanoate: step 2/4. Its function is as follows. Catalyzes the isomerization between 2-isopropylmalate and 3-isopropylmalate, via the formation of 2-isopropylmaleate. In Sinorhizobium fredii (strain NBRC 101917 / NGR234), this protein is 3-isopropylmalate dehydratase large subunit.